The chain runs to 64 residues: Large ribosomal subunit protein bL32 (64 aa).

It belongs to the bacterial ribosomal protein bL32 family.

The chain is Large ribosomal subunit protein bL32 from Flavobacterium psychrophilum (strain ATCC 49511 / DSM 21280 / CIP 103535 / JIP02/86).